A 412-amino-acid chain; its full sequence is Docking protein 2 (412 aa).

The 111-residue stretch at glycine 4–phenylalanine 114 folds into the PH domain. The region spanning proline 147 to threonine 252 is the IRS-type PTB domain. The disordered stretch occupies residues lysine 246–glutamate 296. Tyrosine 271 carries the phosphotyrosine modification. Residues serine 277–arginine 291 are compositionally biased toward pro residues. 2 positions are modified to phosphotyrosine: tyrosine 299 and tyrosine 345. Residues serine 359 to lysine 412 form a disordered region. The segment covering glutamine 361–proline 378 has biased composition (basic and acidic residues).

It belongs to the DOK family. Type A subfamily. In terms of assembly, interacts with phosphorylated RASGAP and EGFR. Interacts with RET and NCK. Interacts (via PH domain) with TEK/TIE2 (tyrosine phosphorylated). As to quaternary structure, (Microbial infection) Interacts with Herpes simplex virus 1 (HHV-1) protein UL46; this interaction induces DOK2 phosphorylation and subsequent degradation. On immunoreceptor stimulation, phosphorylated on C-terminal tyrosine residues. Phosphorylation on Tyr-345 is required for binding to the SH2 domain of NCK. Phosphorylation on both Tyr-271 and Tyr-299 is required for interaction with RASGAP. Phosphorylated on tyrosine residues by TEK/TIE2. Highly expressed in peripheral blood leukocytes, lymph nodes and spleen. Lower expression in thymus, bone marrow and fetal liver.

Its function is as follows. DOK proteins are enzymatically inert adaptor or scaffolding proteins. They provide a docking platform for the assembly of multimolecular signaling complexes. DOK2 may modulate the cellular proliferation induced by IL-4, as well as IL-2 and IL-3. May be involved in modulating Bcr-Abl signaling. Attenuates EGF-stimulated MAP kinase activation. This is Docking protein 2 (DOK2) from Homo sapiens (Human).